A 447-amino-acid polypeptide reads, in one-letter code: UPF0210 protein Ldb1026 (447 aa).

The protein belongs to the UPF0210 family. Homodimer.

In Lactobacillus delbrueckii subsp. bulgaricus (strain ATCC 11842 / DSM 20081 / BCRC 10696 / JCM 1002 / NBRC 13953 / NCIMB 11778 / NCTC 12712 / WDCM 00102 / Lb 14), this protein is UPF0210 protein Ldb1026.